The chain runs to 259 residues: Ubiquinone/menaquinone biosynthesis C-methyltransferase UbiE (259 aa).

S-adenosyl-L-methionine-binding positions include Thr-82, Asp-103, 131 to 132 (NA), and Ser-148.

It belongs to the class I-like SAM-binding methyltransferase superfamily. MenG/UbiE family.

It carries out the reaction a 2-demethylmenaquinol + S-adenosyl-L-methionine = a menaquinol + S-adenosyl-L-homocysteine + H(+). The catalysed reaction is a 2-methoxy-6-(all-trans-polyprenyl)benzene-1,4-diol + S-adenosyl-L-methionine = a 5-methoxy-2-methyl-3-(all-trans-polyprenyl)benzene-1,4-diol + S-adenosyl-L-homocysteine + H(+). It functions in the pathway quinol/quinone metabolism; menaquinone biosynthesis; menaquinol from 1,4-dihydroxy-2-naphthoate: step 2/2. Its pathway is cofactor biosynthesis; ubiquinone biosynthesis. Methyltransferase required for the conversion of demethylmenaquinol (DMKH2) to menaquinol (MKH2) and the conversion of 2-polyprenyl-6-methoxy-1,4-benzoquinol (DDMQH2) to 2-polyprenyl-3-methyl-6-methoxy-1,4-benzoquinol (DMQH2). The chain is Ubiquinone/menaquinone biosynthesis C-methyltransferase UbiE from Haemophilus ducreyi (strain 35000HP / ATCC 700724).